Reading from the N-terminus, the 477-residue chain is RNA pseudouridine synthase 4, mitochondrial (477 aa).

The N-terminal 43 residues, 1 to 43 (MAKWRLATATLRRQLQSSSPTISTFKNPTKALSAAAHQSTRSY), are a transit peptide targeting the mitochondrion. A disordered region spans residues 34–55 (AAAHQSTRSYSTTQTDDSRGKW). A compositionally biased stretch (polar residues) spans 36-48 (AHQSTRSYSTTQT). The S4 RNA-binding domain maps to 90-175 (TTALRWILRC…AKKESFQCSD (86 aa)). Aspartate 236 is a catalytic residue.

The protein belongs to the pseudouridine synthase RluA family.

The protein localises to the mitochondrion. The enzyme catalyses a uridine in RNA = a pseudouridine in RNA. This chain is RNA pseudouridine synthase 4, mitochondrial, found in Arabidopsis thaliana (Mouse-ear cress).